The sequence spans 319 residues: Polyprenal reductase (319 aa).

The Cytoplasmic portion of the chain corresponds to 1–12 (MQLVQLLPPGVS). Residues 13-33 (LLALVWLAVDAAFLTALLLYL) traverse the membrane as a helical segment. The Lumenal segment spans residues 34–79 (QRGCDSGRSLLCSVFQDLIRYGKTKSGLRRPSWLQWFDIPKRCFWH). Residues 80–100 (FYFVSLVWNGFLLWILLHLLL) traverse the membrane as a helical segment. Residues 101 to 122 (QSVPVPEWLQAVLQFLCAGSEP) are Cytoplasmic-facing. The chain crosses the membrane as a helical span at residues 123–143 (QVLGGELSVVLAFSLLWLHSL). Residues 144 to 158 (RRLLECLFVSIFSNG) are Lumenal-facing. The helical transmembrane segment at 159–179 (VIHFVQYCFGLGYYILIGFTI) threads the bilayer. The Cytoplasmic segment spans residues 180-195 (LGYCPLDRRTAVSLDD). The chain crosses the membrane as a helical span at residues 196-216 (LLMQGNWYHILGLTLYVWASL). Topologically, residues 217-266 (HQYTCHCILADLRKSASGAIINLKHAVPTGDWFEKVSCPHYFAELLIYLS) are lumenal. Residues 267–287 (IAVVFGLLNTIWWLVVLYVLL) traverse the membrane as a helical segment. Over 288 to 319 (SQALAAVLCHEFYHEKFDSYPIHRKAFIPLIF) the chain is Cytoplasmic.

Belongs to the steroid 5-alpha reductase family. Polyprenal reductase subfamily.

It localises to the endoplasmic reticulum membrane. The enzyme catalyses a di-trans,poly-cis-dolichal + NADP(+) = a di-trans,poly-cis-polyprenal + NADPH + H(+). The catalysed reaction is a 3-oxo-5alpha-steroid + NADP(+) = a 3-oxo-Delta(4)-steroid + NADPH + H(+). It catalyses the reaction androst-4-ene-3,17-dione + NADPH + H(+) = 5alpha-androstan-3,17-dione + NADP(+). It carries out the reaction 17beta-hydroxy-5alpha-androstan-3-one + NADP(+) = testosterone + NADPH + H(+). It functions in the pathway protein modification; protein glycosylation. In terms of biological role, plays a key role in early steps of protein N-linked glycosylation by being involved in the conversion of polyprenol into dolichol. Acts as a polyprenal reductase that mediates the reduction of polyprenal into dolichal in a NADP-dependent mechanism. Dolichols are required for the synthesis of dolichol-linked monosaccharides and the oligosaccharide precursor used for N-glycosylation. Also able to convert testosterone (T) into 5-alpha-dihydrotestosterone (DHT). The sequence is that of Polyprenal reductase (srd5a3) from Xenopus laevis (African clawed frog).